The chain runs to 169 residues: Ribosome maturation factor RimM (169 aa).

Residues 94 to 167 (ENEFYFHEII…KITIEVMEGL (74 aa)) enclose the PRC barrel domain.

Belongs to the RimM family. In terms of assembly, binds ribosomal protein uS19.

It is found in the cytoplasm. An accessory protein needed during the final step in the assembly of 30S ribosomal subunit, possibly for assembly of the head region. Essential for efficient processing of 16S rRNA. May be needed both before and after RbfA during the maturation of 16S rRNA. It has affinity for free ribosomal 30S subunits but not for 70S ribosomes. The sequence is that of Ribosome maturation factor RimM from Listeria monocytogenes serotype 4b (strain F2365).